Consider the following 129-residue polypeptide: Small ribosomal subunit protein uS12 (129 aa).

Residue D89 is modified to 3-methylthioaspartic acid.

The protein belongs to the universal ribosomal protein uS12 family. In terms of assembly, part of the 30S ribosomal subunit. Contacts proteins S8 and S17. May interact with IF1 in the 30S initiation complex.

Functionally, with S4 and S5 plays an important role in translational accuracy. In terms of biological role, interacts with and stabilizes bases of the 16S rRNA that are involved in tRNA selection in the A site and with the mRNA backbone. Located at the interface of the 30S and 50S subunits, it traverses the body of the 30S subunit contacting proteins on the other side and probably holding the rRNA structure together. The combined cluster of proteins S8, S12 and S17 appears to hold together the shoulder and platform of the 30S subunit. This Helicobacter hepaticus (strain ATCC 51449 / 3B1) protein is Small ribosomal subunit protein uS12.